Consider the following 119-residue polypeptide: Holo-[acyl-carrier-protein] synthase (119 aa).

2 residues coordinate Mg(2+): aspartate 7 and glutamate 53.

It belongs to the P-Pant transferase superfamily. AcpS family. Requires Mg(2+) as cofactor.

The protein resides in the cytoplasm. It carries out the reaction apo-[ACP] + CoA = holo-[ACP] + adenosine 3',5'-bisphosphate + H(+). Functionally, transfers the 4'-phosphopantetheine moiety from coenzyme A to a Ser of acyl-carrier-protein. The chain is Holo-[acyl-carrier-protein] synthase from Dehalococcoides mccartyi (strain ATCC BAA-2266 / KCTC 15142 / 195) (Dehalococcoides ethenogenes (strain 195)).